Here is a 143-residue protein sequence, read N- to C-terminus: Peptidyl-prolyl cis-trans isomerase FKBP15-3 (143 aa).

Positions 56–143 (GKRVSVHYTG…VFDVELLNVK (88 aa)) constitute a PPIase FKBP-type domain.

It belongs to the FKBP-type PPIase family.

It catalyses the reaction [protein]-peptidylproline (omega=180) = [protein]-peptidylproline (omega=0). Functionally, PPIases accelerate the folding of proteins. It catalyzes the cis-trans isomerization of proline imidic peptide bonds in oligopeptides. In Arabidopsis thaliana (Mouse-ear cress), this protein is Peptidyl-prolyl cis-trans isomerase FKBP15-3 (FKBP15-3).